The sequence spans 608 residues: Glutamine--fructose-6-phosphate aminotransferase [isomerizing] (608 aa).

Catalysis depends on cysteine 2, which acts as the Nucleophile; for GATase activity. Positions 2 to 217 (CGIVGIVGTQ…DGDCAIVTRD (216 aa)) constitute a Glutamine amidotransferase type-2 domain. SIS domains lie at 281–422 (ADKA…ARGT) and 456–598 (LSRD…VDQP). Lysine 603 (for Fru-6P isomerization activity) is an active-site residue.

In terms of assembly, homodimer.

The protein resides in the cytoplasm. It catalyses the reaction D-fructose 6-phosphate + L-glutamine = D-glucosamine 6-phosphate + L-glutamate. Its function is as follows. Catalyzes the first step in hexosamine metabolism, converting fructose-6P into glucosamine-6P using glutamine as a nitrogen source. The protein is Glutamine--fructose-6-phosphate aminotransferase [isomerizing] of Agrobacterium fabrum (strain C58 / ATCC 33970) (Agrobacterium tumefaciens (strain C58)).